The primary structure comprises 251 residues: MIVKTDEELQALKEIGYICAKVRDTMKEATKPGVTTRELDHIAKDLFEEHGAISAPIHDENFPGQTCISVNEEVAHGIPGKRVIREGDLVNIDVSALKNGYYADTGISFVVGKSDQPLKQKVCDVATMAFENAMKKVKPGTKLSNIGKAVHATARQNDLTVIKNLTGHGVGQSLHEAPNHVMNYFDPKDKTLLKEGQVIAVEPFISTHATFVTEGKNEWAFETKDKSYVAQIEHTVIVTKDGPLLTTKIDD.

Position 76 (His-76) interacts with substrate. A divalent metal cation-binding residues include Asp-93, Asp-104, and His-168. His-175 provides a ligand contact to substrate. The a divalent metal cation site is built by Glu-202 and Glu-233.

This sequence belongs to the peptidase M24A family. Methionine aminopeptidase type 1 subfamily. As to quaternary structure, monomer. Co(2+) is required as a cofactor. Zn(2+) serves as cofactor. The cofactor is Mn(2+). Requires Fe(2+) as cofactor.

It carries out the reaction Release of N-terminal amino acids, preferentially methionine, from peptides and arylamides.. In terms of biological role, removes the N-terminal methionine from nascent proteins. The N-terminal methionine is often cleaved when the second residue in the primary sequence is small and uncharged (Met-Ala-, Cys, Gly, Pro, Ser, Thr, or Val). Requires deformylation of the N(alpha)-formylated initiator methionine before it can be hydrolyzed. This Staphylococcus epidermidis (strain ATCC 12228 / FDA PCI 1200) protein is Methionine aminopeptidase.